The sequence spans 747 residues: Elongation factor G, mitochondrial (747 aa).

The N-terminal 16 residues, 1 to 16, are a transit peptide targeting the mitochondrion; it reads MSLIMRVLNGNLSLRL. The tr-type G domain maps to 42-319; that stretch reads ERIRNIGISA…AIIDYLPNPG (278 aa). GTP is bound by residues 51–58, 118–122, and 172–175; these read AHIDSGKT, DTPGH, and NKLD.

Belongs to the TRAFAC class translation factor GTPase superfamily. Classic translation factor GTPase family. EF-G/EF-2 subfamily.

Its subcellular location is the mitochondrion. Its pathway is protein biosynthesis; polypeptide chain elongation. Functionally, mitochondrial GTPase that catalyzes the GTP-dependent ribosomal translocation step during translation elongation. During this step, the ribosome changes from the pre-translocational (PRE) to the post-translocational (POST) state as the newly formed A-site-bound peptidyl-tRNA and P-site-bound deacylated tRNA move to the P and E sites, respectively. Catalyzes the coordinated movement of the two tRNA molecules, the mRNA and conformational changes in the ribosome. Essential during development as it acts as a retrograde signal from mitochondria to the nucleus to slow down cell proliferation if mitochondrial energy output is low. The polypeptide is Elongation factor G, mitochondrial (Drosophila grimshawi (Hawaiian fruit fly)).